The following is a 154-amino-acid chain: 6,7-dimethyl-8-ribityllumazine synthase (154 aa).

Residues Phe-22, 56–58, and 81–83 each bind 5-amino-6-(D-ribitylamino)uracil; these read AFE and VLI. 86–87 lines the (2S)-2-hydroxy-3-oxobutyl phosphate pocket; it reads ET. Catalysis depends on His-89, which acts as the Proton donor. Phe-114 is a binding site for 5-amino-6-(D-ribitylamino)uracil. Position 128 (Arg-128) interacts with (2S)-2-hydroxy-3-oxobutyl phosphate.

The protein belongs to the DMRL synthase family.

The enzyme catalyses (2S)-2-hydroxy-3-oxobutyl phosphate + 5-amino-6-(D-ribitylamino)uracil = 6,7-dimethyl-8-(1-D-ribityl)lumazine + phosphate + 2 H2O + H(+). It participates in cofactor biosynthesis; riboflavin biosynthesis; riboflavin from 2-hydroxy-3-oxobutyl phosphate and 5-amino-6-(D-ribitylamino)uracil: step 1/2. Its function is as follows. Catalyzes the formation of 6,7-dimethyl-8-ribityllumazine by condensation of 5-amino-6-(D-ribitylamino)uracil with 3,4-dihydroxy-2-butanone 4-phosphate. This is the penultimate step in the biosynthesis of riboflavin. This chain is 6,7-dimethyl-8-ribityllumazine synthase, found in Chlamydia abortus (strain DSM 27085 / S26/3) (Chlamydophila abortus).